Here is a 180-residue protein sequence, read N- to C-terminus: Large ribosomal subunit protein uL5 (180 aa).

The protein belongs to the universal ribosomal protein uL5 family. Part of the 50S ribosomal subunit; part of the 5S rRNA/L5/L18/L25 subcomplex. Contacts the 5S rRNA and the P site tRNA. Forms a bridge to the 30S subunit in the 70S ribosome.

Functionally, this is one of the proteins that bind and probably mediate the attachment of the 5S RNA into the large ribosomal subunit, where it forms part of the central protuberance. In the 70S ribosome it contacts protein S13 of the 30S subunit (bridge B1b), connecting the 2 subunits; this bridge is implicated in subunit movement. Contacts the P site tRNA; the 5S rRNA and some of its associated proteins might help stabilize positioning of ribosome-bound tRNAs. This is Large ribosomal subunit protein uL5 from Streptococcus mutans serotype c (strain ATCC 700610 / UA159).